We begin with the raw amino-acid sequence, 2118 residues long: Cilia- and flagella-associated protein 65 (2118 aa).

Residues 6-26 traverse the membrane as a helical segment; the sequence is GSLRALLLAAAAAAAAAAGAV. The 122-residue stretch at 615–736 folds into the MSP domain; sequence FLHSNPEFGP…HTPRLTTDLP (122 aa). 3 disordered regions span residues 1007-1029, 1764-1909, and 1924-1958; these read APLL…LDAG, SGGS…DDFA, and AGGG…APPR. A compositionally biased stretch (gly residues) spans 1825 to 1834; the sequence is GGAGGAPGGD. The segment covering 1840-1849 has biased composition (low complexity); it reads RPGTPSMTAA. A compositionally biased stretch (basic residues) spans 1850-1859; that stretch reads AHHHHHHPRH. Low complexity-rich tracts occupy residues 1892 to 1902 and 1936 to 1949; these read SISGAPDPDSA and PGGS…ELAP. Residues 2016 to 2045 are a coiled coil; that stretch reads AVRAAAEAARAEAEARAAAEAATKAAAEAE.

It belongs to the CFAP65 family.

The protein localises to the cell projection. It is found in the cilium. Its subcellular location is the flagellum membrane. It localises to the cytoplasm. May play a role in flagellar formation and mobility. This is Cilia- and flagella-associated protein 65 from Chlamydomonas reinhardtii (Chlamydomonas smithii).